Reading from the N-terminus, the 147-residue chain is Spermidine export protein MdtJ (147 aa).

Helical transmembrane passes span 1-21, 31-51, 54-74, and 81-101; these read MIYW…TLSM, TGHV…SLAV, VALG…ITIF, and ETLS…ILLV. Basic residues predominate over residues 105–117; that stretch reads TRKPKQPNRHRGN. The interval 105 to 147 is disordered; it reads TRKPKQPNRHRGNRPPSVQGLKTQTTGHHKGVAVESGEHHAAA.

Belongs to the drug/metabolite transporter (DMT) superfamily. Small multidrug resistance (SMR) (TC 2.A.7.1) family. MdtJ subfamily. Forms a complex with MdtI.

It localises to the cell inner membrane. Its function is as follows. Catalyzes the excretion of spermidine. The polypeptide is Spermidine export protein MdtJ (Yersinia pseudotuberculosis serotype IB (strain PB1/+)).